Reading from the N-terminus, the 551-residue chain is Sodium-dependent high-affinity dicarboxylate transporter 2 (551 aa).

10 helical membrane-spanning segments follow: residues 9–29 (LIKK…LFFG), 34–54 (CLFS…PIGV), 82–102 (SIVL…TGLH), 119–139 (VMLL…SDTA), 194–214 (FCKA…TAII), 243–263 (WMVF…IILV), 347–367 (VSGV…FDPI), 417–437 (IFVG…IVIM), 449–469 (IFIP…LYLA), and 497–517 (VISM…CILI).

Belongs to the SLC13A/DASS transporter (TC 2.A.47) family. NADC subfamily.

The protein resides in the membrane. High-affinity sodium-dicarboxylate cotransporter that accepts a range of tricarboxylic acid-cycle intermediates with 4-5 carbon atoms. There is no interaction with monocarboxylates. This chain is Sodium-dependent high-affinity dicarboxylate transporter 2 (nac-2), found in Caenorhabditis elegans.